The sequence spans 289 residues: Probable porphobilinogen deaminase (289 aa).

S-(dipyrrolylmethanemethyl)cysteine is present on Cys233.

This sequence belongs to the HMBS family. It depends on dipyrromethane as a cofactor.

The catalysed reaction is 4 porphobilinogen + H2O = hydroxymethylbilane + 4 NH4(+). It participates in porphyrin-containing compound metabolism; protoporphyrin-IX biosynthesis; coproporphyrinogen-III from 5-aminolevulinate: step 2/4. Tetrapolymerization of the monopyrrole PBG into the hydroxymethylbilane pre-uroporphyrinogen in several discrete steps. This chain is Probable porphobilinogen deaminase (hemC), found in Methanothermobacter thermautotrophicus (strain ATCC 29096 / DSM 1053 / JCM 10044 / NBRC 100330 / Delta H) (Methanobacterium thermoautotrophicum).